A 439-amino-acid chain; its full sequence is Methylenetetrahydrofolate--tRNA-(uracil-5-)-methyltransferase TrmFO (439 aa).

Position 8 to 13 (8 to 13 (GGGLAG)) interacts with FAD.

Belongs to the MnmG family. TrmFO subfamily. Requires FAD as cofactor.

It localises to the cytoplasm. The enzyme catalyses uridine(54) in tRNA + (6R)-5,10-methylene-5,6,7,8-tetrahydrofolate + NADH + H(+) = 5-methyluridine(54) in tRNA + (6S)-5,6,7,8-tetrahydrofolate + NAD(+). It carries out the reaction uridine(54) in tRNA + (6R)-5,10-methylene-5,6,7,8-tetrahydrofolate + NADPH + H(+) = 5-methyluridine(54) in tRNA + (6S)-5,6,7,8-tetrahydrofolate + NADP(+). Functionally, catalyzes the folate-dependent formation of 5-methyl-uridine at position 54 (M-5-U54) in all tRNAs. This Dictyoglomus thermophilum (strain ATCC 35947 / DSM 3960 / H-6-12) protein is Methylenetetrahydrofolate--tRNA-(uracil-5-)-methyltransferase TrmFO.